A 145-amino-acid chain; its full sequence is Large ribosomal subunit protein bL19 (145 aa).

The protein belongs to the bacterial ribosomal protein bL19 family.

In terms of biological role, this protein is located at the 30S-50S ribosomal subunit interface and may play a role in the structure and function of the aminoacyl-tRNA binding site. In Brucella anthropi (strain ATCC 49188 / DSM 6882 / CCUG 24695 / JCM 21032 / LMG 3331 / NBRC 15819 / NCTC 12168 / Alc 37) (Ochrobactrum anthropi), this protein is Large ribosomal subunit protein bL19.